The primary structure comprises 122 residues: Large ribosomal subunit protein uL14 (122 aa).

This sequence belongs to the universal ribosomal protein uL14 family. Part of the 50S ribosomal subunit. Forms a cluster with proteins L3 and L19. In the 70S ribosome, L14 and L19 interact and together make contacts with the 16S rRNA in bridges B5 and B8.

Functionally, binds to 23S rRNA. Forms part of two intersubunit bridges in the 70S ribosome. The sequence is that of Large ribosomal subunit protein uL14 from Syntrophotalea carbinolica (strain DSM 2380 / NBRC 103641 / GraBd1) (Pelobacter carbinolicus).